The chain runs to 329 residues: DNA-directed RNA polymerase subunit alpha (329 aa).

The alpha N-terminal domain (alpha-NTD) stretch occupies residues 1-235; that stretch reads MQGSVTEFLK…EQLDAFVDLR (235 aa). Residues 249–329 are alpha C-terminal domain (alpha-CTD); the sequence is FDPILLRPVD…NWPPASIAED (81 aa).

The protein belongs to the RNA polymerase alpha chain family. In terms of assembly, homodimer. The RNAP catalytic core consists of 2 alpha, 1 beta, 1 beta' and 1 omega subunit. When a sigma factor is associated with the core the holoenzyme is formed, which can initiate transcription.

It carries out the reaction RNA(n) + a ribonucleoside 5'-triphosphate = RNA(n+1) + diphosphate. Functionally, DNA-dependent RNA polymerase catalyzes the transcription of DNA into RNA using the four ribonucleoside triphosphates as substrates. The protein is DNA-directed RNA polymerase subunit alpha of Histophilus somni (strain 129Pt) (Haemophilus somnus).